The primary structure comprises 232 residues: uncharacterized protein (232 aa).

This is an uncharacterized protein from Homo sapiens (Human).